A 416-amino-acid polypeptide reads, in one-letter code: Cotranscriptional regulator ARB2A (416 aa).

Residues 1 to 18 form the signal peptide; sequence MSISLSSLILLPIWINMA. Residues 208 to 247 are disordered; sequence KPKIHVQSSSDSSDEPAEKRERKDKVSKETKKRRDFYEKY. Positions 223–236 are enriched in basic and acidic residues; the sequence is PAEKRERKDKVSKE. The Nucleophile role is filled by S293. Positions 413–416 match the Prevents secretion from ER motif; the sequence is HEEL.

This sequence belongs to the ARB2A family. In terms of assembly, interacts with AGO2. Found in a complex, composed of AGO2, CHD7 and ARB2A.

The protein localises to the nucleus. It localises to the cytoplasm. Its subcellular location is the endoplasmic reticulum. Plays a role in the regulation of alternative splicing, by interacting with AGO2 and CHD7. Seems to be required for stabilizing protein-protein interactions at the chromatin-spliceosome interface. May have hydrolase activity. In Homo sapiens (Human), this protein is Cotranscriptional regulator ARB2A.